Consider the following 98-residue polypeptide: PE family immunomodulator PE35 (98 aa).

In terms of domain architecture, PE spans 1 to 90; sequence MEKMSHDPIA…DVARTYSQID (90 aa).

The protein belongs to the mycobacterial PE family. As to quaternary structure, interacts with PPE68. PE35/PPE68 complex interacts with human TLR2.

The protein localises to the secreted. It is found in the cell surface. Plays a major role in RD1-associated pathogenesis, and may contribute to the establishment and maintenance of M.tuberculosis infection. Together with PPE68, stimulates the secretion of IL-10 and MCP-1 from human macrophages, via the interaction with human Toll-like receptor 2 (TLR2). The sequence is that of PE family immunomodulator PE35 (PE35) from Mycobacterium tuberculosis (strain CDC 1551 / Oshkosh).